A 480-amino-acid chain; its full sequence is Adenosylhomocysteinase (480 aa).

Substrate contacts are provided by Thr-63, Asp-142, and Glu-203. 204–206 (TTT) serves as a coordination point for NAD(+). Lys-233 and Asp-237 together coordinate substrate. NAD(+) is bound by residues Asn-238, 267–272 (GYGDVG), Glu-290, Asn-325, 346–348 (IGH), and Asn-394.

The protein belongs to the adenosylhomocysteinase family. NAD(+) is required as a cofactor.

The protein localises to the cytoplasm. It catalyses the reaction S-adenosyl-L-homocysteine + H2O = L-homocysteine + adenosine. It participates in amino-acid biosynthesis; L-homocysteine biosynthesis; L-homocysteine from S-adenosyl-L-homocysteine: step 1/1. May play a key role in the regulation of the intracellular concentration of adenosylhomocysteine. This is Adenosylhomocysteinase from Xylella fastidiosa (strain Temecula1 / ATCC 700964).